The chain runs to 451 residues: Velvet complex subunit 2 (451 aa).

3 disordered regions span residues M1 to I95, P205 to P312, and P426 to Y451. Polar residues-rich tracts occupy residues T18–R28, M40–P62, and P205–Y217. Positions P92–R428 constitute a Velvet domain. A compositionally biased stretch (low complexity) spans P267–S283. Basic and acidic residues predominate over residues I427–G445.

This sequence belongs to the velvet family. VelB subfamily. As to quaternary structure, component of the heterotrimeric velvet complex composed of LAE1, VEL1 and VEL2; VEL1 acting as a bridging protein between LAE1 and VEL2. Forms a heterodimeric complex with VOS1; the formation of the VEL2-VOS1 complex is light-dependent.

The protein localises to the nucleus. It is found in the cytoplasm. In terms of biological role, component of the velvet transcription factor complex that controls sexual/asexual developmental ratio in response to light, promoting sexual development in the darkness while stimulating asexual sporulation under illumination. The velvet complex acts as a global regulator for secondary metabolite gene expression. Component of the VEL2-VOS1 heterodimeric complex that plays a dual role in activating genes associated with spore maturation and repressing certain development-associated genes. The VEL2-VOS1 complex binds DNA through the DNA-binding domain of VOS1 that recognizes an 11-nucleotide consensus sequence 5'-CTGGCCGCGGC-3' consisting of two motifs in the promoters of key developmental regulatory genes. Controls the expression of the oxalic acid and melanin gene clusters. Involved in the resistance to oxidative stress. Required for full virulence. This Botryotinia fuckeliana (strain B05.10) (Noble rot fungus) protein is Velvet complex subunit 2.